Reading from the N-terminus, the 80-residue chain is Translation initiation factor IF-1, chloroplastic (80 aa).

One can recognise an S1-like domain in the interval 1 to 72; it reads MKEHDLINME…TKGRILYRIR (72 aa).

Belongs to the IF-1 family. Component of the 30S ribosomal translation pre-initiation complex which assembles on the 30S ribosome in the order IF-2 and IF-3, IF-1 and N-formylmethionyl-tRNA(fMet); mRNA recruitment can occur at any time during PIC assembly.

It is found in the plastid. The protein resides in the chloroplast. In terms of biological role, one of the essential components for the initiation of protein synthesis. Stabilizes the binding of IF-2 and IF-3 on the 30S subunit to which N-formylmethionyl-tRNA(fMet) subsequently binds. Helps modulate mRNA selection, yielding the 30S pre-initiation complex (PIC). Upon addition of the 50S ribosomal subunit IF-1, IF-2 and IF-3 are released leaving the mature 70S translation initiation complex. In Psilotum nudum (Whisk fern), this protein is Translation initiation factor IF-1, chloroplastic.